A 266-amino-acid chain; its full sequence is 14-3-3 protein homolog (266 aa).

The tract at residues 154–177 (KQAADQAQESYQKATETAEGHSPA) is disordered. Residues 158–168 (DQAQESYQKAT) show a composition bias toward polar residues.

Belongs to the 14-3-3 family.

The sequence is that of 14-3-3 protein homolog from Neospora caninum (Coccidian parasite).